The chain runs to 437 residues: Phenylacetate-coenzyme A ligase (437 aa).

Belongs to the phenylacetyl-CoA ligase family. As to quaternary structure, monomer.

It carries out the reaction 2-phenylacetate + ATP + CoA = phenylacetyl-CoA + AMP + diphosphate. Its pathway is aromatic compound metabolism; phenylacetate degradation. Catalyzes the activation of phenylacetic acid (PA) to phenylacetyl-CoA (PA-CoA). The protein is Phenylacetate-coenzyme A ligase (paaK) of Escherichia coli (strain K12).